We begin with the raw amino-acid sequence, 475 residues long: Ubiquilin-like protein (475 aa).

The Ubiquitin-like domain occupies 31–105 (TRVIVKTAGN…IYLVIKSKQG (75 aa)). Disordered regions lie at residues 113–138 (FRDL…VHQP) and 305–325 (QVQS…QLTQ). Polar residues predominate over residues 129-138 (KGNSSRVHQP).

In Homo sapiens (Human), this protein is Ubiquilin-like protein (UBQLNL).